A 309-amino-acid chain; its full sequence is MITFLPIIFSILVVVTFVIGNFANGFIALVNSTEWVKRQKISFADQIVTALAVSRVGLLWVLLLNWYSTVLNPAFYSVELRTTAYNIWAVTGHFSNWLATSLSIFYLLKIANFSNLIFLHLKRRVKSVILVMLLGPLLFLACHLFVVNMNQIVWTKEYEGNMTWKIKLRRAMYLSDTTVTMLANLVPFTVTLISFLLLVCSLCEHLKKMQLHGKGSQDPSTKVHIKALQTVISFLLLCAIYFVSVIISVWSFKNLENKPVFMFCQAIGFSCSSAHPFILIWGNKKLKQPFLSVLWQMRYWVKGEKPSSS.

Position 1 (Met-1) is a topological domain, extracellular. Residues 2 to 22 traverse the membrane as a helical segment; sequence ITFLPIIFSILVVVTFVIGNF. Residues 23-55 are Cytoplasmic-facing; that stretch reads ANGFIALVNSTEWVKRQKISFADQIVTALAVSR. A helical membrane pass occupies residues 56 to 76; the sequence is VGLLWVLLLNWYSTVLNPAFY. Residues 77 to 98 lie on the Extracellular side of the membrane; sequence SVELRTTAYNIWAVTGHFSNWL. The chain crosses the membrane as a helical span at residues 99-119; that stretch reads ATSLSIFYLLKIANFSNLIFL. At 120–126 the chain is on the cytoplasmic side; it reads HLKRRVK. A helical membrane pass occupies residues 127–147; sequence SVILVMLLGPLLFLACHLFVV. Residues 148 to 178 are Extracellular-facing; it reads NMNQIVWTKEYEGNMTWKIKLRRAMYLSDTT. A glycan (N-linked (GlcNAc...) asparagine) is linked at Asn-161. The helical transmembrane segment at 179–199 threads the bilayer; that stretch reads VTMLANLVPFTVTLISFLLLV. At 200 to 229 the chain is on the cytoplasmic side; it reads CSLCEHLKKMQLHGKGSQDPSTKVHIKALQ. Residues 230-250 traverse the membrane as a helical segment; the sequence is TVISFLLLCAIYFVSVIISVW. Residues 251–259 are Extracellular-facing; sequence SFKNLENKP. Residues 260-280 form a helical membrane-spanning segment; it reads VFMFCQAIGFSCSSAHPFILI. Residues 281–309 lie on the Cytoplasmic side of the membrane; sequence WGNKKLKQPFLSVLWQMRYWVKGEKPSSS.

The protein belongs to the G-protein coupled receptor T2R family.

The protein localises to the membrane. In terms of biological role, receptor that may play a role in the perception of bitterness and is gustducin-linked. May play a role in sensing the chemical composition of the gastrointestinal content. The activity of this receptor may stimulate alpha gustducin, mediate PLC-beta-2 activation and lead to the gating of TRPM5. This Pan paniscus (Pygmy chimpanzee) protein is Taste receptor type 2 member 45 (TAS2R45).